The sequence spans 295 residues: Pyridoxal 5'-phosphate synthase subunit PdxS (295 aa).

Residue Asp-25 participates in D-ribose 5-phosphate binding. The Schiff-base intermediate with D-ribose 5-phosphate role is filled by Lys-82. A D-ribose 5-phosphate-binding site is contributed by Gly-154. Arg-166 serves as a coordination point for D-glyceraldehyde 3-phosphate. Residues Gly-215 and 236–237 contribute to the D-ribose 5-phosphate site; that span reads GS.

This sequence belongs to the PdxS/SNZ family. In the presence of PdxT, forms a dodecamer of heterodimers.

The catalysed reaction is aldehydo-D-ribose 5-phosphate + D-glyceraldehyde 3-phosphate + L-glutamine = pyridoxal 5'-phosphate + L-glutamate + phosphate + 3 H2O + H(+). It participates in cofactor biosynthesis; pyridoxal 5'-phosphate biosynthesis. Functionally, catalyzes the formation of pyridoxal 5'-phosphate from ribose 5-phosphate (RBP), glyceraldehyde 3-phosphate (G3P) and ammonia. The ammonia is provided by the PdxT subunit. Can also use ribulose 5-phosphate and dihydroxyacetone phosphate as substrates, resulting from enzyme-catalyzed isomerization of RBP and G3P, respectively. This chain is Pyridoxal 5'-phosphate synthase subunit PdxS, found in Actinobacillus pleuropneumoniae serotype 7 (strain AP76).